A 401-amino-acid polypeptide reads, in one-letter code: Argininosuccinate synthase (401 aa).

9 to 17 (AYSGGLDTS) is a binding site for ATP. L-citrulline is bound at residue Y87. G117 is a binding site for ATP. L-aspartate contacts are provided by T119, N123, and D124. N123 serves as a coordination point for L-citrulline. Residues R127, S176, S185, E261, and Y273 each coordinate L-citrulline.

It belongs to the argininosuccinate synthase family. Type 1 subfamily. As to quaternary structure, homotetramer.

It is found in the cytoplasm. It catalyses the reaction L-citrulline + L-aspartate + ATP = 2-(N(omega)-L-arginino)succinate + AMP + diphosphate + H(+). It participates in amino-acid biosynthesis; L-arginine biosynthesis; L-arginine from L-ornithine and carbamoyl phosphate: step 2/3. In Prosthecochloris aestuarii (strain DSM 271 / SK 413), this protein is Argininosuccinate synthase.